Reading from the N-terminus, the 168-residue chain is Protein-export protein SecB (168 aa).

Belongs to the SecB family. In terms of assembly, homotetramer, a dimer of dimers. One homotetramer interacts with 1 SecA dimer.

Its subcellular location is the cytoplasm. In terms of biological role, one of the proteins required for the normal export of preproteins out of the cell cytoplasm. It is a molecular chaperone that binds to a subset of precursor proteins, maintaining them in a translocation-competent state. It also specifically binds to its receptor SecA. The protein is Protein-export protein SecB of Glaesserella parasuis serovar 5 (strain SH0165) (Haemophilus parasuis).